Here is a 69-residue protein sequence, read N- to C-terminus: Metallothionein-like protein CRS5 (69 aa).

Belongs to the metallothionein superfamily. Type 13 family.

In terms of biological role, critical role in copper (specific) homeostasis and detoxification. May protect by directly chelating and sequestering copper ions. The sequence is that of Metallothionein-like protein CRS5 (CRS5) from Saccharomyces cerevisiae (strain RM11-1a) (Baker's yeast).